Consider the following 574-residue polypeptide: Alpha-farnesene synthase (574 aa).

3 residues coordinate Mn(2+): aspartate 326, aspartate 330, and glutamate 478. Positions 326 to 330 match the DDXXD motif motif; sequence DDIYD.

Belongs to the terpene synthase family. Tpsd subfamily. Mn(2+) is required as a cofactor.

The protein localises to the cytoplasm. The catalysed reaction is (2E,6E)-farnesyl diphosphate = (3E,6E)-alpha-farnesene + diphosphate. It functions in the pathway terpene metabolism; oleoresin biosynthesis. Its function is as follows. Involved in sesquiterpene (C15) biosynthesis. The major product is alpha-farnesene. In Pinus taeda (Loblolly pine), this protein is Alpha-farnesene synthase (PT5).